The chain runs to 281 residues: 2-dehydro-3-deoxyphosphooctonate aldolase (281 aa).

It belongs to the KdsA family.

Its subcellular location is the cytoplasm. The enzyme catalyses D-arabinose 5-phosphate + phosphoenolpyruvate + H2O = 3-deoxy-alpha-D-manno-2-octulosonate-8-phosphate + phosphate. It functions in the pathway carbohydrate biosynthesis; 3-deoxy-D-manno-octulosonate biosynthesis; 3-deoxy-D-manno-octulosonate from D-ribulose 5-phosphate: step 2/3. The protein operates within bacterial outer membrane biogenesis; lipopolysaccharide biosynthesis. In Pseudomonas syringae pv. tomato (strain ATCC BAA-871 / DC3000), this protein is 2-dehydro-3-deoxyphosphooctonate aldolase.